A 147-amino-acid chain; its full sequence is Myoglobin (147 aa).

Residues 2–141 form the Globin domain; sequence ADFDAVLKCW…VIADLEANYK (140 aa). A nitrite-binding site is contributed by H60. H60 is a binding site for O2. H89 contacts heme b.

Belongs to the globin family. As to quaternary structure, monomeric.

The protein localises to the cytoplasm. It localises to the sarcoplasm. It catalyses the reaction Fe(III)-heme b-[protein] + nitric oxide + H2O = Fe(II)-heme b-[protein] + nitrite + 2 H(+). The enzyme catalyses H2O2 + AH2 = A + 2 H2O. Its function is as follows. Monomeric heme protein which primary function is to store oxygen and facilitate its diffusion within muscle tissues. Reversibly binds oxygen through a pentacoordinated heme iron and enables its timely and efficient release as needed during periods of heightened demand. Depending on the oxidative conditions of tissues and cells, and in addition to its ability to bind oxygen, it also has a nitrite reductase activity whereby it regulates the production of bioactive nitric oxide. Under stress conditions, like hypoxia and anoxia, it also protects cells against reactive oxygen species thanks to its pseudoperoxidase activity. The chain is Myoglobin (mb) from Auxis rochei (Bullet tuna).